Consider the following 187-residue polypeptide: Adenine phosphoribosyltransferase (187 aa).

The protein belongs to the purine/pyrimidine phosphoribosyltransferase family. As to quaternary structure, homodimer.

Its subcellular location is the cytoplasm. The catalysed reaction is AMP + diphosphate = 5-phospho-alpha-D-ribose 1-diphosphate + adenine. Its pathway is purine metabolism; AMP biosynthesis via salvage pathway; AMP from adenine: step 1/1. Functionally, catalyzes a salvage reaction resulting in the formation of AMP, that is energically less costly than de novo synthesis. In Burkholderia pseudomallei (strain 1106a), this protein is Adenine phosphoribosyltransferase.